The primary structure comprises 636 residues: Ubiquitin-activating enzyme E1-like (636 aa).

ATP is bound by residues 28-33, Asp52, 60-63, Lys76, and 121-126; these read GAGGIG, NLNR, and DNLAAR. 2 residues coordinate Zn(2+): Cys162 and Cys165. Cys177 (glycyl thioester intermediate) is an active-site residue. Residues Cys435 and Cys438 each coordinate Zn(2+). Residues 581–636 form a disordered region; the sequence is DGIVILDDDEGEITIDAEPINGSKKRPVDTEISEAPSNKRTKLVNEPTNSDIVELD. The segment covering 586–595 has biased composition (acidic residues); that stretch reads LDDDEGEITI. The short motif at 619–622 is the Nuclear localization signal element; sequence KRTK. A compositionally biased stretch (polar residues) spans 626–636; the sequence is EPTNSDIVELD.

It belongs to the ubiquitin-activating E1 family. Heterodimer of UBA2 and AOS1. The complex binds SMT3. Multiubiquitinated in vivo.

Its subcellular location is the nucleus. It participates in protein modification; protein sumoylation. Its function is as follows. The dimeric enzyme acts as a SMT3 E1 ligase. It mediates ATP-dependent activation of SMT3 and formation of a thioester with a conserved cysteine residue on AOS1. In Saccharomyces cerevisiae (strain ATCC 204508 / S288c) (Baker's yeast), this protein is Ubiquitin-activating enzyme E1-like (UBA2).